Here is a 73-residue protein sequence, read N- to C-terminus: Structural DNA-binding protein p10 (73 aa).

Positions 1–35 (MPTKAGTKSTAHKKTTTKGPSKSPKGKTHATALHQ) are disordered.

This sequence belongs to the asfivirus P10 family.

The protein localises to the virion. May play a role in genome packaging through direct interaction with viral DNA. Binds to ssDNA and dsDNA with the same apparent affinity in vitro. The polypeptide is Structural DNA-binding protein p10 (African swine fever virus (isolate Tick/Malawi/Lil 20-1/1983) (ASFV)).